We begin with the raw amino-acid sequence, 115 residues long: Large ribosomal subunit protein bL20 (115 aa).

This sequence belongs to the bacterial ribosomal protein bL20 family.

In terms of biological role, binds directly to 23S ribosomal RNA and is necessary for the in vitro assembly process of the 50S ribosomal subunit. It is not involved in the protein synthesizing functions of that subunit. This Pelodictyon phaeoclathratiforme (strain DSM 5477 / BU-1) protein is Large ribosomal subunit protein bL20.